The primary structure comprises 181 residues: uncharacterized protein (181 aa).

The segment at 25–47 (ELANEVSAGDEEPYDDDIWESED) is disordered. The segment covering 32-47 (AGDEEPYDDDIWESED) has biased composition (acidic residues). The chain crosses the membrane as a helical span at residues 149–169 (ILTLILLSCGLLMLFIGYPIL).

The protein localises to the cytoplasm. It is found in the membrane. This is an uncharacterized protein from Schizosaccharomyces pombe (strain 972 / ATCC 24843) (Fission yeast).